A 385-amino-acid polypeptide reads, in one-letter code: Lysine 6-dehydrogenase (385 aa).

It belongs to the saccharopine dehydrogenase family. Homohexamer.

The enzyme catalyses L-lysine + NAD(+) = L-1-piperideine-6-carboxylate + NH4(+) + NADH + 2 H(+). Functionally, catalyzes the oxidative deamination of L-lysine in the presence of NAD. Can also use (S)-(2-aminoethyl)-L-cysteine as a substrate, but more slowly. Can use both NAD and NADP but the preferred substrate is NAD. In Geobacillus stearothermophilus (Bacillus stearothermophilus), this protein is Lysine 6-dehydrogenase (lysDH).